The following is a 401-amino-acid chain: Phosphoglycerate kinase (401 aa).

Residues 24-26 (DFN), R40, 63-66 (HFGR), R122, and R155 contribute to the substrate site. Residues K206, G297, E328, and 357–360 (GGDS) contribute to the ATP site.

The protein belongs to the phosphoglycerate kinase family. In terms of assembly, monomer.

It localises to the cytoplasm. The catalysed reaction is (2R)-3-phosphoglycerate + ATP = (2R)-3-phospho-glyceroyl phosphate + ADP. It participates in carbohydrate degradation; glycolysis; pyruvate from D-glyceraldehyde 3-phosphate: step 2/5. The sequence is that of Phosphoglycerate kinase from Synechococcus sp. (strain CC9605).